The chain runs to 1262 residues: Separin homolog sep-1 (1262 aa).

The Peptidase C50 domain maps to 957–1051 (VQNAYYILDP…SVRTIPQALG (95 aa)). Residue C1040 is part of the active site. The segment at 1147–1262 (KDQRNLPQTP…ARTPSRSRNL (116 aa)) is disordered. Polar residues-rich tracts occupy residues 1151 to 1162 (NLPQTPKTSART) and 1177 to 1197 (FVTS…NKSP). Residues 1243–1262 (TPTTRTTRSSARTPSRSRNL) are compositionally biased toward low complexity.

In terms of assembly, forms a complex with securin-like protein ify-1 (via C-terminus). Interaction with ify-1 stabilizes sep-1. Also maintains the complex in the cytoplasm during interphase and recruits it to chromosomes during the first meiotic division. Expressed in oocytes. Expressed in male germline. Expressed in spermatocytes but undetectable in spermatids (at protein level).

The protein localises to the cytoplasm. It is found in the chromosome. Its subcellular location is the cytoplasmic granule. It localises to the cytoskeleton. The protein resides in the microtubule organizing center. The protein localises to the centrosome. It is found in the spindle. Its subcellular location is the cleavage furrow. It localises to the midbody. The catalysed reaction is All bonds known to be hydrolyzed by this endopeptidase have arginine in P1 and an acidic residue in P4. P6 is often occupied by an acidic residue or by a hydroxy-amino-acid residue, the phosphorylation of which enhances cleavage.. Probably maintained in an inactive state via its interaction with securin ify-1 which acts as a pseudosubstrate thereby blocking access to the catalytic site. Upon ify-1 degradation at the onset of anaphase, sep-1 is likely to become active. In addition, interaction with ify-1 stabilizes sep-1. Functionally, cysteine protease, which plays a central role in homologous chromosome separation during meiosis I and in sister chromatid separation during embryonic mitosis. Promotes chromosome/sister chromatid segregation by cleaving the scc-1 (mitosis) and rec-8 (meiosis) subunits of the cohesin complex at the onset of anaphase. May cleave histone H3-like protein cpar-1 during meiosis I metaphase-anaphase transition. Promotes cortical granule exocytosis after oocyte fertilization during the first meiotic anaphase. Essential for embryonic cytokinesis by regulating rab-11-positive vesicle trafficking at the plasma membrane at the cleavage furrow and midbody. Regulates centriole segregation during spermatocyte meiosis. Required for embryonic anterior-posterior axis formation. This is Separin homolog sep-1 from Caenorhabditis elegans.